Consider the following 676-residue polypeptide: E3 ubiquitin-protein ligase ICP0 (676 aa).

An RING-type zinc finger spans residues 13–52 (CCICLDAITGAARALPCLHAFCLACIRRWLEGRPTCPLCK). Disordered stretches follow at residues 101 to 135 (DLTAADGEAPGAGGEAGAAGGSEAGGGAGGAEAAG), 266 to 486 (HLIP…PAPI), and 555 to 676 (AAIS…AWRQ). Positions 110–135 (PGAGGEAGAAGGSEAGGGAGGAEAAG) are enriched in gly residues. The span at 286-303 (SDSDSEGSEDDSWSESEE) shows a compositional bias: acidic residues. Positions 304 to 314 (SSSGLSTSDLT) are enriched in low complexity. Residues 315–328 (AIDDTETEPETDAE) are compositionally biased toward acidic residues. The span at 351–361 (YVSTRGRQTPA) shows a compositional bias: polar residues. Composition is skewed to low complexity over residues 375-388 (GRAAAVSAPPSSRS) and 397-411 (LPAAPRAAPAAQARA). Positions 422–439 (GAGLGVAAGETAGWGVGS) are enriched in gly residues. Basic and acidic residues predominate over residues 440-450 (EEGRGERRAKL). The segment covering 474–484 (TPAPAPAPAPA) has biased composition (pro residues). Residues 555–597 (AAISTRAPTPSPAGRAPAADPRRAGAPALAGAARAEAGRNGNP) show a composition bias toward low complexity.

In terms of processing, auto-ubiquitinated. The strongly acidic region might serve as a transcriptional activation domain, possibly regulated through phosphorylation by casein kinase II.

The enzyme catalyses S-ubiquitinyl-[E2 ubiquitin-conjugating enzyme]-L-cysteine + [acceptor protein]-L-lysine = [E2 ubiquitin-conjugating enzyme]-L-cysteine + N(6)-ubiquitinyl-[acceptor protein]-L-lysine.. Its function is as follows. Evades nuclear antiviral defenses triggered by dsDNA viruses. Acts during the initial stages of lytic infection and the reactivation of latent viral genome. Prevents the antiviral effect of nuclear bodies by degrading host PML and SP100. This Bos taurus (Bovine) protein is E3 ubiquitin-protein ligase ICP0 (BICP0).